The sequence spans 237 residues: Heme oxygenase (237 aa).

His17 is a heme b binding site.

Belongs to the heme oxygenase family.

Its subcellular location is the plastid. It localises to the chloroplast. The enzyme catalyses heme b + 3 reduced [NADPH--hemoprotein reductase] + 3 O2 = biliverdin IXalpha + CO + Fe(2+) + 3 oxidized [NADPH--hemoprotein reductase] + 3 H2O + H(+). In terms of biological role, catalyzes the opening of the heme ring with the release of iron. Key enzyme in the synthesis of the chromophoric part of the photosynthetic antennae. The chain is Heme oxygenase (pbsA) from Guillardia theta (Cryptophyte).